A 120-amino-acid chain; its full sequence is Small ribosomal subunit protein eS24 (120 aa).

Residues 101-120 (RDAGTKQKKGGSKGGQGAKG) are disordered.

The protein belongs to the eukaryotic ribosomal protein eS24 family.

This chain is Small ribosomal subunit protein eS24, found in Saccharolobus islandicus (strain Y.N.15.51 / Yellowstone #2) (Sulfolobus islandicus).